A 189-amino-acid polypeptide reads, in one-letter code: GTPase HRas (189 aa).

Met1 is modified (N-acetylmethionine). N-acetylthreonine; in GTPase HRas, N-terminally processed is present on Thr2. A GTP-binding site is contributed by 10–17 (GAGGVGKS). The short motif at 32-40 (YDPTIEDSY) is the Effector region element. GTP-binding positions include 57 to 61 (DTAGQ) and 116 to 119 (NKCD). Cys118 carries the post-translational modification S-nitrosocysteine. The segment at 166-185 (HKLRKLNPPDESGPGCMNCK) is hypervariable region. S-palmitoyl cysteine attachment occurs at residues Cys181 and Cys184. Residue Cys186 is modified to Cysteine methyl ester. A lipid anchor (S-farnesyl cysteine) is attached at Cys186. The propeptide at 187-189 (VIS) is removed in mature form.

Belongs to the small GTPase superfamily. Ras family. In terms of processing, palmitoylated by the ZDHHC9-GOLGA7 complex. A continuous cycle of de- and re-palmitoylation regulates rapid exchange between plasma membrane and Golgi.

The protein resides in the cell membrane. It localises to the golgi apparatus membrane. It carries out the reaction GTP + H2O = GDP + phosphate + H(+). Alternates between an inactive form bound to GDP and an active form bound to GTP. Activated by a guanine nucleotide-exchange factor (GEF) and inactivated by a GTPase-activating protein (GAP). Ras proteins bind GDP/GTP and possess intrinsic GTPase activity. In Gallus gallus (Chicken), this protein is GTPase HRas (HRAS).